Here is a 181-residue protein sequence, read N- to C-terminus: Regulator of G-protein signaling 5 (181 aa).

The 117-residue stretch at 64–180 (SLDKLLQNNY…VRSEFYQEFI (117 aa)) folds into the RGS domain.

The protein localises to the cytoplasm. The protein resides in the membrane. In terms of biological role, inhibits signal transduction by increasing the GTPase activity of G protein alpha subunits thereby driving them into their inactive GDP-bound form. Binds to G(i)-alpha and G(o)-alpha, but not to G(s)-alpha. The polypeptide is Regulator of G-protein signaling 5 (RGS5) (Bos taurus (Bovine)).